The sequence spans 312 residues: Aspartate carbamoyltransferase catalytic subunit (312 aa).

Positions 58 and 59 each coordinate carbamoyl phosphate. Lys86 lines the L-aspartate pocket. Positions 108, 136, and 139 each coordinate carbamoyl phosphate. Residues Arg169 and Arg223 each contribute to the L-aspartate site. Residues Gly264 and Pro265 each coordinate carbamoyl phosphate.

This sequence belongs to the aspartate/ornithine carbamoyltransferase superfamily. ATCase family. Heterododecamer (2C3:3R2) of six catalytic PyrB chains organized as two trimers (C3), and six regulatory PyrI chains organized as three dimers (R2).

The enzyme catalyses carbamoyl phosphate + L-aspartate = N-carbamoyl-L-aspartate + phosphate + H(+). It functions in the pathway pyrimidine metabolism; UMP biosynthesis via de novo pathway; (S)-dihydroorotate from bicarbonate: step 2/3. Catalyzes the condensation of carbamoyl phosphate and aspartate to form carbamoyl aspartate and inorganic phosphate, the committed step in the de novo pyrimidine nucleotide biosynthesis pathway. In Heliobacterium modesticaldum (strain ATCC 51547 / Ice1), this protein is Aspartate carbamoyltransferase catalytic subunit.